A 436-amino-acid polypeptide reads, in one-letter code: Serine hydroxymethyltransferase (436 aa).

(6S)-5,6,7,8-tetrahydrofolate contacts are provided by residues leucine 133 and 137–139 (GHL). Lysine 242 carries the post-translational modification N6-(pyridoxal phosphate)lysine. Residue 366–368 (SPF) coordinates (6S)-5,6,7,8-tetrahydrofolate.

The protein belongs to the SHMT family. Homodimer. Pyridoxal 5'-phosphate serves as cofactor.

It localises to the cytoplasm. It carries out the reaction (6R)-5,10-methylene-5,6,7,8-tetrahydrofolate + glycine + H2O = (6S)-5,6,7,8-tetrahydrofolate + L-serine. It participates in one-carbon metabolism; tetrahydrofolate interconversion. It functions in the pathway amino-acid biosynthesis; glycine biosynthesis; glycine from L-serine: step 1/1. Catalyzes the reversible interconversion of serine and glycine with tetrahydrofolate (THF) serving as the one-carbon carrier. This reaction serves as the major source of one-carbon groups required for the biosynthesis of purines, thymidylate, methionine, and other important biomolecules. Also exhibits THF-independent aldolase activity toward beta-hydroxyamino acids, producing glycine and aldehydes, via a retro-aldol mechanism. In Novosphingobium aromaticivorans (strain ATCC 700278 / DSM 12444 / CCUG 56034 / CIP 105152 / NBRC 16084 / F199), this protein is Serine hydroxymethyltransferase.